We begin with the raw amino-acid sequence, 222 residues long: Dual specificity phosphatase 29 (222 aa).

Residues 54–202 (HVNEVWPKLY…LRELDKQLVQ (149 aa)) form the Tyrosine-protein phosphatase domain. 146-153 (HCAMGRSR) is a binding site for substrate. The Phosphocysteine intermediate role is filled by C147. Residues 201-222 (VQQRRGAQHRGEAGEKAGEKEP) form a disordered region. Over residues 209–222 (HRGEAGEKAGEKEP) the composition is skewed to basic and acidic residues.

It belongs to the protein-tyrosine phosphatase family. Non-receptor class dual specificity subfamily. In terms of assembly, homodimer. Interacts with PRKAA2.

The protein resides in the cytoplasm. It is found in the nucleus. The catalysed reaction is O-phospho-L-tyrosyl-[protein] + H2O = L-tyrosyl-[protein] + phosphate. The enzyme catalyses O-phospho-L-seryl-[protein] + H2O = L-seryl-[protein] + phosphate. It catalyses the reaction O-phospho-L-threonyl-[protein] + H2O = L-threonyl-[protein] + phosphate. In terms of biological role, dual specificity phosphatase able to dephosphorylate phosphotyrosine, phosphoserine and phosphothreonine residues within the same substrate, with a preference for phosphotyrosine as a substrate. Involved in the modulation of intracellular signaling cascades. In skeletal muscle regulates systemic glucose homeostasis by activating, AMPK, an energy sensor protein kinase. Affects MAP kinase signaling though modulation of the MAPK1/2 cascade in skeletal muscle promoting muscle cell differentiation, development and atrophy. This Sus scrofa (Pig) protein is Dual specificity phosphatase 29 (DUSP29).